The primary structure comprises 89 residues: Small ribosomal subunit protein uS15 (89 aa).

The protein belongs to the universal ribosomal protein uS15 family. Part of the 30S ribosomal subunit. Forms a bridge to the 50S subunit in the 70S ribosome, contacting the 23S rRNA.

Functionally, one of the primary rRNA binding proteins, it binds directly to 16S rRNA where it helps nucleate assembly of the platform of the 30S subunit by binding and bridging several RNA helices of the 16S rRNA. Forms an intersubunit bridge (bridge B4) with the 23S rRNA of the 50S subunit in the ribosome. This Vibrio atlanticus (strain LGP32) (Vibrio splendidus (strain Mel32)) protein is Small ribosomal subunit protein uS15.